The following is a 410-amino-acid chain: Arginine biosynthesis bifunctional protein ArgJ (410 aa).

Thr160, Lys186, Thr197, Glu283, Asn405, and Thr410 together coordinate substrate. Thr197 serves as the catalytic Nucleophile.

It belongs to the ArgJ family. Heterotetramer of two alpha and two beta chains.

The protein localises to the cytoplasm. It catalyses the reaction N(2)-acetyl-L-ornithine + L-glutamate = N-acetyl-L-glutamate + L-ornithine. The catalysed reaction is L-glutamate + acetyl-CoA = N-acetyl-L-glutamate + CoA + H(+). It functions in the pathway amino-acid biosynthesis; L-arginine biosynthesis; L-ornithine and N-acetyl-L-glutamate from L-glutamate and N(2)-acetyl-L-ornithine (cyclic): step 1/1. Its pathway is amino-acid biosynthesis; L-arginine biosynthesis; N(2)-acetyl-L-ornithine from L-glutamate: step 1/4. Competitively inhibited by L-ornithine. Its function is as follows. Catalyzes two activities which are involved in the cyclic version of arginine biosynthesis: the synthesis of N-acetylglutamate from glutamate and acetyl-CoA as the acetyl donor, and of ornithine by transacetylation between N(2)-acetylornithine and glutamate. The sequence is that of Arginine biosynthesis bifunctional protein ArgJ from Geobacillus stearothermophilus (Bacillus stearothermophilus).